Here is a 340-residue protein sequence, read N- to C-terminus: Phenylalanine--tRNA ligase alpha subunit (340 aa).

Position 258 (E258) interacts with Mg(2+).

Belongs to the class-II aminoacyl-tRNA synthetase family. Phe-tRNA synthetase alpha subunit type 1 subfamily. In terms of assembly, tetramer of two alpha and two beta subunits. It depends on Mg(2+) as a cofactor.

It localises to the cytoplasm. The enzyme catalyses tRNA(Phe) + L-phenylalanine + ATP = L-phenylalanyl-tRNA(Phe) + AMP + diphosphate + H(+). The chain is Phenylalanine--tRNA ligase alpha subunit from Corynebacterium efficiens (strain DSM 44549 / YS-314 / AJ 12310 / JCM 11189 / NBRC 100395).